The sequence spans 5065 residues: Dynein heavy chain-like protein 1 (5065 aa).

Positions Met-1 to Glu-1957 are stem. Positions Gln-1677–Lys-1705 form a coiled coil. Residues Tyr-1958–Ser-2179 form an AAA 1 region. Gly-1996 to Thr-2003 serves as a coordination point for ATP. Residues Phe-2203–Thr-2223 form a disordered region. Positions Asn-2204–Asn-2215 are enriched in low complexity. AAA stretches follow at residues Asn-2281 to Ile-2632, Asp-2751 to Ala-3004, and Ile-3097 to Tyr-3367. ATP is bound at residue Gly-2319–Ser-2326. The tract at residues Glu-2507–Asn-2529 is disordered. ATP-binding positions include Gly-2790–Thr-2797 and Gly-3135–Thr-3142. A stalk region spans residues Ile-3386 to Ser-3701. Coiled coils occupy residues Glu-3388 to Gln-3466 and Thr-3970 to Asn-3997. AAA regions lie at residues Leu-3754–Lys-3983 and Phe-4289–Ser-4507. A compositionally biased stretch (basic and acidic residues) spans Lys-4686–Lys-4705. The interval Lys-4686–Glu-4727 is disordered.

Belongs to the dynein heavy chain family. As to quaternary structure, consists of at least two heavy chains and a number of intermediate and light chains.

Its subcellular location is the cytoplasm. The protein resides in the cytoskeleton. Functionally, acts as a motor for the intracellular retrograde motility of vesicles and organelles along microtubules. Dynein has ATPase activity; the force-producing power stroke is thought to occur on release of ADP. This Plasmodium falciparum (isolate 3D7) protein is Dynein heavy chain-like protein 1.